A 165-amino-acid polypeptide reads, in one-letter code: PTS system glucose-specific EIIA component (165 aa).

Residues 34–138 (DPVFAQKMMG…SSITPIIISN (105 aa)) form the PTS EIIA type-1 domain. Positions 71 and 86 each coordinate Zn(2+). H86 (tele-phosphohistidine intermediate; for EIIA activity) is an active-site residue. Position 86 is a phosphohistidine; by HPr (H86).

Heterodimer with glycerol kinase (glpk). It depends on Zn(2+) as a cofactor.

It localises to the cytoplasm. In terms of biological role, the phosphoenolpyruvate-dependent sugar phosphotransferase system (sugar PTS), a major carbohydrate active transport system, catalyzes the phosphorylation of incoming sugar substrates concomitantly with their translocation across the cell membrane. The enzyme II complex composed of PtsG and Crr is involved in glucose transport. This is PTS system glucose-specific EIIA component (crr) from Oceanobacillus iheyensis (strain DSM 14371 / CIP 107618 / JCM 11309 / KCTC 3954 / HTE831).